A 500-amino-acid polypeptide reads, in one-letter code: UBX domain-containing protein 5 (500 aa).

Positions 50 to 61 are enriched in low complexity; it reads SNNTPTPSNSTP. Residues 50 to 70 form a disordered region; that stretch reads SNNTPTPSNSTPMAPTSVDSD. The residue at position 139 (S139) is a Phosphoserine. Disordered regions lie at residues 142–169 and 371–399; these read NQRLDDTNTNTYINDNSSDSLDSEEEND and ESLNNNSSKSNQEEVPSTGEEQKRVQEPD. Positions 148 to 161 are enriched in low complexity; that stretch reads TNTNTYINDNSSDS. The UBX domain occupies 415–493; sequence KPGITTRIQI…GLKNSSLLLE (79 aa).

In terms of assembly, interacts with CDC48.

The protein resides in the nucleus. The protein localises to the cytoplasm. Its function is as follows. Involved in CDC48-dependent protein degradation through the ubiquitin/proteasome pathway. The chain is UBX domain-containing protein 5 (UBX5) from Saccharomyces cerevisiae (strain ATCC 204508 / S288c) (Baker's yeast).